Reading from the N-terminus, the 473-residue chain is Cysteine--tRNA ligase (473 aa).

Cys33 serves as a coordination point for Zn(2+). A 'HIGH' region motif is present at residues 35-45; sequence ATVQGQPHIGH. Residues Cys211, His236, and Glu240 each coordinate Zn(2+). A 'KMSKS' region motif is present at residues 267–271; sequence KMSKS. Lys270 provides a ligand contact to ATP.

It belongs to the class-I aminoacyl-tRNA synthetase family. As to quaternary structure, monomer. The cofactor is Zn(2+).

The protein resides in the cytoplasm. It carries out the reaction tRNA(Cys) + L-cysteine + ATP = L-cysteinyl-tRNA(Cys) + AMP + diphosphate. The protein is Cysteine--tRNA ligase of Mycobacterium leprae (strain Br4923).